A 457-amino-acid polypeptide reads, in one-letter code: Siroheme synthase (457 aa).

The precorrin-2 dehydrogenase /sirohydrochlorin ferrochelatase stretch occupies residues 1-204 (MDHLPIFCQL…ADEKAVNATT (204 aa)). Residues 22 to 23 (DV) and 43 to 44 (LT) contribute to the NAD(+) site. Ser128 carries the post-translational modification Phosphoserine. Residues 216–457 (GEVVLVGAGP…RDKLNWFSNY (242 aa)) form a uroporphyrinogen-III C-methyltransferase region. Pro225 contacts S-adenosyl-L-methionine. Asp248 serves as the catalytic Proton acceptor. Lys270 serves as the catalytic Proton donor. Residues 301 to 303 (GGD), Ile306, 331 to 332 (TA), Met382, and Gly411 contribute to the S-adenosyl-L-methionine site.

In the N-terminal section; belongs to the precorrin-2 dehydrogenase / sirohydrochlorin ferrochelatase family. It in the C-terminal section; belongs to the precorrin methyltransferase family.

The catalysed reaction is uroporphyrinogen III + 2 S-adenosyl-L-methionine = precorrin-2 + 2 S-adenosyl-L-homocysteine + H(+). It carries out the reaction precorrin-2 + NAD(+) = sirohydrochlorin + NADH + 2 H(+). The enzyme catalyses siroheme + 2 H(+) = sirohydrochlorin + Fe(2+). Its pathway is cofactor biosynthesis; adenosylcobalamin biosynthesis; precorrin-2 from uroporphyrinogen III: step 1/1. It participates in cofactor biosynthesis; adenosylcobalamin biosynthesis; sirohydrochlorin from precorrin-2: step 1/1. It functions in the pathway porphyrin-containing compound metabolism; siroheme biosynthesis; precorrin-2 from uroporphyrinogen III: step 1/1. The protein operates within porphyrin-containing compound metabolism; siroheme biosynthesis; siroheme from sirohydrochlorin: step 1/1. Its pathway is porphyrin-containing compound metabolism; siroheme biosynthesis; sirohydrochlorin from precorrin-2: step 1/1. In terms of biological role, multifunctional enzyme that catalyzes the SAM-dependent methylations of uroporphyrinogen III at position C-2 and C-7 to form precorrin-2 via precorrin-1. Then it catalyzes the NAD-dependent ring dehydrogenation of precorrin-2 to yield sirohydrochlorin. Finally, it catalyzes the ferrochelation of sirohydrochlorin to yield siroheme. This Salmonella choleraesuis (strain SC-B67) protein is Siroheme synthase.